A 317-amino-acid chain; its full sequence is Serine/threonine-protein phosphatase PP1 isozyme 1 (317 aa).

Mn(2+) contacts are provided by Asp75, His77, Asp103, and Asn135. The Proton donor role is filled by His136. His184 and His259 together coordinate Mn(2+).

This sequence belongs to the PPP phosphatase family. PP-1 subfamily. The cofactor is Mn(2+).

The catalysed reaction is O-phospho-L-seryl-[protein] + H2O = L-seryl-[protein] + phosphate. The enzyme catalyses O-phospho-L-threonyl-[protein] + H2O = L-threonyl-[protein] + phosphate. In Nicotiana tabacum (Common tobacco), this protein is Serine/threonine-protein phosphatase PP1 isozyme 1 (NPP1).